The chain runs to 305 residues: Sulfate adenylyltransferase subunit 2 (305 aa).

The protein belongs to the PAPS reductase family. CysD subfamily. As to quaternary structure, heterodimer composed of CysD, the smaller subunit, and CysN.

The catalysed reaction is sulfate + ATP + H(+) = adenosine 5'-phosphosulfate + diphosphate. It functions in the pathway sulfur metabolism; hydrogen sulfide biosynthesis; sulfite from sulfate: step 1/3. Its function is as follows. With CysN forms the ATP sulfurylase (ATPS) that catalyzes the adenylation of sulfate producing adenosine 5'-phosphosulfate (APS) and diphosphate, the first enzymatic step in sulfur assimilation pathway. APS synthesis involves the formation of a high-energy phosphoric-sulfuric acid anhydride bond driven by GTP hydrolysis by CysN coupled to ATP hydrolysis by CysD. This Pseudomonas savastanoi pv. phaseolicola (strain 1448A / Race 6) (Pseudomonas syringae pv. phaseolicola (strain 1448A / Race 6)) protein is Sulfate adenylyltransferase subunit 2.